A 358-amino-acid polypeptide reads, in one-letter code: Photosystem II protein D1 1 (358 aa).

The next 3 membrane-spanning stretches (helical) occupy residues Tyr-28 to Ile-45, His-117 to Leu-132, and Trp-141 to Ala-155. A chlorophyll a-binding site is contributed by His-117. Tyr-125 contributes to the pheophytin a binding site. Residues Asp-169 and Glu-188 each coordinate [CaMn4O5] cluster. A helical transmembrane segment spans residues Phe-196–Leu-217. His-197 serves as a coordination point for chlorophyll a. A quinone is bound by residues His-214 and Ser-263–Phe-264. Fe cation is bound at residue His-214. A Fe cation-binding site is contributed by His-271. The helical transmembrane segment at Phe-273–Met-287 threads the bilayer. Residues His-331, Glu-332, Asp-341, and Ala-343 each contribute to the [CaMn4O5] cluster site. Positions Ala-344–Gly-358 are excised as a propeptide.

The protein belongs to the reaction center PufL/M/PsbA/D family. In terms of assembly, PSII is composed of 1 copy each of membrane proteins PsbA, PsbB, PsbC, PsbD, PsbE, PsbF, PsbH, PsbI, PsbJ, PsbK, PsbL, PsbM, PsbT, PsbX, PsbY, PsbZ, Psb30/Ycf12, peripheral proteins PsbO, CyanoQ (PsbQ), PsbU, PsbV and a large number of cofactors. It forms dimeric complexes. The D1/D2 heterodimer binds P680, chlorophylls that are the primary electron donor of PSII, and subsequent electron acceptors. It shares a non-heme iron and each subunit binds pheophytin, quinone, additional chlorophylls, carotenoids and lipids. D1 provides most of the ligands for the Mn4-Ca-O5 cluster of the oxygen-evolving complex (OEC). There is also a Cl(-1) ion associated with D1 and D2, which is required for oxygen evolution. The PSII complex binds additional chlorophylls, carotenoids and specific lipids. is required as a cofactor. Post-translationally, tyr-160 forms a radical intermediate that is referred to as redox-active TyrZ, YZ or Y-Z. In terms of processing, C-terminally processed by CtpA; processing is essential to allow assembly of the oxygen-evolving complex and thus photosynthetic growth.

The protein resides in the cellular thylakoid membrane. It catalyses the reaction 2 a plastoquinone + 4 hnu + 2 H2O = 2 a plastoquinol + O2. In terms of biological role, photosystem II (PSII) is a light-driven water:plastoquinone oxidoreductase that uses light energy to abstract electrons from H(2)O, generating O(2) and a proton gradient subsequently used for ATP formation. It consists of a core antenna complex that captures photons, and an electron transfer chain that converts photonic excitation into a charge separation. The D1/D2 (PsbA/PsbD) reaction center heterodimer binds P680, the primary electron donor of PSII as well as several subsequent electron acceptors. This is Photosystem II protein D1 1 from Synechococcus sp. (strain CC9902).